The chain runs to 802 residues: Leucine--tRNA ligase (802 aa).

Residues 40–51 (PYPSGAGLHVGH) carry the 'HIGH' region motif. The 'KMSKS' region signature appears at 576–580 (KMSKS). Lysine 579 provides a ligand contact to ATP.

Belongs to the class-I aminoacyl-tRNA synthetase family.

It is found in the cytoplasm. The enzyme catalyses tRNA(Leu) + L-leucine + ATP = L-leucyl-tRNA(Leu) + AMP + diphosphate. This chain is Leucine--tRNA ligase, found in Bacillus thuringiensis subsp. konkukian (strain 97-27).